A 619-amino-acid polypeptide reads, in one-letter code: ATP-dependent RNA helicase DBP8 (619 aa).

The tract at residues 1 to 149 (MAVSKKSRKS…NGLPSASKPS (149 aa)) is disordered. A compositionally biased stretch (acidic residues) spans 46–67 (EGNDESDEEDDDVSNEGEDEGE). Over residues 68 to 78 (SSGSEAESSVA) the composition is skewed to low complexity. Residues 93-105 (LDAEGEEDKENEE) are compositionally biased toward acidic residues. A compositionally biased stretch (polar residues) spans 137–147 (PQPNGLPSASK). The Q motif signature appears at 152-180 (VTFESLGLSRPLITALASINIKKPTEIQA). The Helicase ATP-binding domain maps to 183–356 (VEPILSGRDC…NKEPPAGKQR (174 aa)). 196–203 (AKTGSGKT) is an ATP binding site. Residues 304 to 307 (DEAD) carry the DEAD box motif. Residues 414-436 (EREAALGKKGKKPKQAKEEEDAP) form a disordered region. A Helicase C-terminal domain is found at 430-572 (KEEEDAPSVP…ELKLDEDKVL (143 aa)).

This sequence belongs to the DEAD box helicase family. DDX49/DBP8 subfamily.

The protein resides in the nucleus. Its subcellular location is the nucleolus. The enzyme catalyses ATP + H2O = ADP + phosphate + H(+). Its function is as follows. ATP-binding RNA helicase involved in 40S ribosomal subunit biogenesis and is required for the normal formation of 18S rRNAs through pre-rRNA processing at A0, A1 and A2 sites. Required for vegetative growth. This Cryptococcus neoformans var. neoformans serotype D (strain B-3501A) (Filobasidiella neoformans) protein is ATP-dependent RNA helicase DBP8 (DBP8).